The following is an 839-amino-acid chain: MSAFRFWSGLLMLLGFLCPRSSPCGISTHIEIGHRALEFLHLQDGSINYKELLLRHQDAYQAGSVFPDSFYPSICERGQFHDVSESTHWTPFLNASVHYIRKNYPLPWDEDTEKLVAFLFGITSHMVADVNWHSLGIEQGFLRTMAAIDFHNSYPEAHPAGDFGGDVLSQFEFKFNYLSRHWYVPAEDLLGIYRELYGRIVITKKAIVDCSYLQFLEMYAEMLAISKLYPTYSVKSPFLVEQFQEYFLGGLEDMAFWSTNIYHLTSYMLKNGTSNCNLPENPLFITCGGQQNNTHGSKVQKNGFHKNVTAALTKNIGKHINYTKRGVFFSVDSWTMDSLSFMYKSLERSIREMFIGSSQPLTHVSSPAASYYLSFPYTRLGWAMTSADLNQDGYGDLVVGAPGYSHPGRIHVGRVYLIYGNDLGLPRIDLDLDKEAHGILEGFQPSGRFGSAVAVLDFNVDGVPDLAVGAPSVGSEKLTYTGAVYVYFGSKQGQLSSSPNVTISCQDTYCNLGWTLLAADVNGDSEPDLVIGSPFAPGGGKQKGIVAAFYSGSSYSSREKLNVEAANWMVKGEEDFAWLGYSLHGVNVNNRTLLLAGSPTWKDTSSQGHLFRTRDEKQSPGRVYGYFPPICQSWFTISGDKAMGKLGTSLSSGHVMVNGTRTQVLLVGAPTQDVVSKVSFLTMTLHQGGSTRMYELTPDSQPSLLSTFSGNRRFSRFGGVLHLSDLDNDGLDEIIVAAPLRITDATAGLMGEEDGRVYVFNGKQITVGDVTGKCKSWVTPCPEEKAQYVLISPEAGSRFGSSVITVRSKEKNQVIIAAGRSSLGARLSGVLHIYRLGQD.

The first 23 residues, Met-1–Pro-23, serve as a signal peptide directing secretion. N-linked (GlcNAc...) asparagine glycosylation is found at Asn-94, Asn-271, Asn-292, Asn-307, and Asn-321. 7 FG-GAP repeats span residues Ser-365–Arg-427, Lys-434–Ser-496, Ser-498–Arg-558, Asn-562–Arg-622, Gln-632–Arg-692, Ser-703–Asp-769, and Gln-787–Asp-839. Asn-500, Asn-590, and Asn-658 each carry an N-linked (GlcNAc...) asparagine glycan.

The protein belongs to the GPLD1 family. Monomer. In terms of processing, glycosylated.

It is found in the secreted. It catalyses the reaction a 6-(alpha-D-glucosaminyl)-1-(1,2-diacyl-sn-glycero-3-phospho)-1D-myo-inositol + H2O = 6-(alpha-D-glucosaminyl)-1D-myo-inositol + a 1,2-diacyl-sn-glycero-3-phosphate + H(+). This protein hydrolyzes the inositol phosphate linkage in proteins anchored by phosphatidylinositol glycans (GPI-anchor) thus releasing these proteins from the membrane. The chain is Phosphatidylinositol-glycan-specific phospholipase D (GPLD1) from Bos taurus (Bovine).